We begin with the raw amino-acid sequence, 646 residues long: Altered inheritance of mitochondria protein 9, mitochondrial (646 aa).

A mitochondrion-targeting transit peptide spans 1–34 (MLRIPSRIGSRQVLACAGRNLKCGSVMRHISRRN).

This sequence belongs to the AIM9 family.

It is found in the mitochondrion. The sequence is that of Altered inheritance of mitochondria protein 9, mitochondrial (AIM9) from Candida glabrata (strain ATCC 2001 / BCRC 20586 / JCM 3761 / NBRC 0622 / NRRL Y-65 / CBS 138) (Yeast).